Here is a 430-residue protein sequence, read N- to C-terminus: Glutamate-1-semialdehyde 2,1-aminomutase (430 aa).

Position 267 is an N6-(pyridoxal phosphate)lysine (Lys267).

The protein belongs to the class-III pyridoxal-phosphate-dependent aminotransferase family. HemL subfamily. Homodimer. It depends on pyridoxal 5'-phosphate as a cofactor.

The protein resides in the cytoplasm. It carries out the reaction (S)-4-amino-5-oxopentanoate = 5-aminolevulinate. Its pathway is porphyrin-containing compound metabolism; protoporphyrin-IX biosynthesis; 5-aminolevulinate from L-glutamyl-tRNA(Glu): step 2/2. This chain is Glutamate-1-semialdehyde 2,1-aminomutase, found in Anaeromyxobacter dehalogenans (strain 2CP-1 / ATCC BAA-258).